We begin with the raw amino-acid sequence, 227 residues long: Small ribosomal subunit protein uS3m (227 aa).

Belongs to the universal ribosomal protein uS3 family. Component of the mitochondrial small ribosomal subunit (mt-SSU). Mature yeast 74S mitochondrial ribosomes consist of a small (37S) and a large (54S) subunit. The 37S small subunit contains a 15S ribosomal RNA (15S mt-rRNA) and at least 32 different proteins. The 54S large subunit contains a 21S rRNA (21S mt-rRNA) and at least 45 different proteins. uS3m, uS4m and uS5m form the narrow entry site of the mRNA channel.

It is found in the mitochondrion. Its function is as follows. Essential for mitochondrial protein synthesis and required for the maturation of small ribosomal subunits. Component of the mitochondrial ribosome (mitoribosome), a dedicated translation machinery responsible for the synthesis of mitochondrial genome-encoded proteins, including at least some of the essential transmembrane subunits of the mitochondrial respiratory chain. The mitoribosomes are attached to the mitochondrial inner membrane and translation products are cotranslationally integrated into the membrane. uS3m is essential for mitochondrial protein synthesis and required for the maturation of small ribosomal subunits. The chain is Small ribosomal subunit protein uS3m (var1) from Schizosaccharomyces pombe (strain 972 / ATCC 24843) (Fission yeast).